The chain runs to 588 residues: Interferon-activable protein 208 (588 aa).

The 88-residue stretch at 5 to 92 (MVNYYKQIVL…VDILRKEMEK (88 aa)) folds into the Pyrin domain. 2 disordered regions span residues 157-183 (ATST…SLQT) and 469-526 (EMQN…RRVN). Composition is skewed to polar residues over residues 172–183 (RFPTTASSSLQT) and 470–487 (MQNP…QPRL).

It belongs to the HIN-200 family.

The sequence is that of Interferon-activable protein 208 from Mus musculus (Mouse).